Consider the following 317-residue polypeptide: Acetyl-coenzyme A carboxylase carboxyl transferase subunit alpha (317 aa).

The CoA carboxyltransferase C-terminal domain maps to 40 to 294 (RLQKKSEELT…KQQILADLQD (255 aa)).

The protein belongs to the AccA family. In terms of assembly, acetyl-CoA carboxylase is a heterohexamer composed of biotin carboxyl carrier protein (AccB), biotin carboxylase (AccC) and two subunits each of ACCase subunit alpha (AccA) and ACCase subunit beta (AccD).

The protein localises to the cytoplasm. The enzyme catalyses N(6)-carboxybiotinyl-L-lysyl-[protein] + acetyl-CoA = N(6)-biotinyl-L-lysyl-[protein] + malonyl-CoA. The protein operates within lipid metabolism; malonyl-CoA biosynthesis; malonyl-CoA from acetyl-CoA: step 1/1. Its function is as follows. Component of the acetyl coenzyme A carboxylase (ACC) complex. First, biotin carboxylase catalyzes the carboxylation of biotin on its carrier protein (BCCP) and then the CO(2) group is transferred by the carboxyltransferase to acetyl-CoA to form malonyl-CoA. In Actinobacillus pleuropneumoniae serotype 5b (strain L20), this protein is Acetyl-coenzyme A carboxylase carboxyl transferase subunit alpha.